A 226-amino-acid chain; its full sequence is Agamous-like MADS-box protein AP3 (226 aa).

The MADS-box domain occupies 1-61 (MARGKIEIKR…GKLHEYISPS (61 aa)). The region spanning 84 to 174 (YERMQENLKK…LHEFDARDRD (91 aa)) is the K-box domain.

Expressed during flower development in stamens and petals.

The protein localises to the nucleus. Functionally, probable transcription factor involved in flower development. This is Agamous-like MADS-box protein AP3 from Vitis vinifera (Grape).